Consider the following 901-residue polypeptide: HTH-type transcriptional regulator MalT (901 aa).

39–46 (SPAGYGKT) serves as a coordination point for ATP. An HTH luxR-type domain is found at 829–894 (ELIRTSPLTQ…AAVQHAQKLL (66 aa)). The H-T-H motif DNA-binding region spans 853 to 872 (NEQIAGELEVAATTIKTHIR).

This sequence belongs to the MalT family. As to quaternary structure, monomer in solution. Oligomerizes to an active state in the presence of the positive effectors ATP and maltotriose.

With respect to regulation, activated by ATP and maltotriose, which are both required for DNA binding. Positively regulates the transcription of the maltose regulon whose gene products are responsible for uptake and catabolism of malto-oligosaccharides. Specifically binds to the promoter region of its target genes, recognizing a short DNA motif called the MalT box. This Escherichia coli O45:K1 (strain S88 / ExPEC) protein is HTH-type transcriptional regulator MalT.